A 158-amino-acid chain; its full sequence is Endoribonuclease YbeY (158 aa).

3 residues coordinate Zn(2+): H114, H118, and H124.

This sequence belongs to the endoribonuclease YbeY family. The cofactor is Zn(2+).

Its subcellular location is the cytoplasm. Its function is as follows. Single strand-specific metallo-endoribonuclease involved in late-stage 70S ribosome quality control and in maturation of the 3' terminus of the 16S rRNA. The protein is Endoribonuclease YbeY of Pasteurella multocida (strain Pm70).